Reading from the N-terminus, the 262-residue chain is MGSSCLPPGFRFHPTDEELIGYYLSRKIEGLEIELEVIPVIDLYKFDPWELPGKSFLPNRDLEWFFFCPRDKKYANGSRTNRATKAGYWKATGKDRKITCKSSHVIAGYRKTLVFYEGRAPLGDRTNWFMHEYRLCDIDDHSQKSPNFKGAFALCRVVKKNELKKNSKSLKNKNEQDIGSCYSSLATSPCRDEASQIQSFKPSSTTNDSSSIWISPDFILDSSKDYPQIKEVASECFPNYHFPVTTANHHVEFPLQEMLVRS.

Residues 6 to 160 enclose the NAC domain; sequence LPPGFRFHPT…AFALCRVVKK (155 aa). A DNA-binding region spans residues 107–166; that stretch reads AGYRKTLVFYEGRAPLGDRTNWFMHEYRLCDIDDHSQKSPNFKGAFALCRVVKKNELKKN.

Its subcellular location is the nucleus. Functionally, transcription factor involved in tissue reunion of wounded inflorescence stems. Required for the division of pith cells in the reunion process, which is dependent on polar-transported auxin and the wound-inducible hormones ethylene and jasmonate. Binds to the promoters of XTH19 and XTH20 to induce their expression via auxin signaling. XTH19 and XTH20 are involved in cell proliferation in the tissue reunion process of incised stems. Involved in hypocotyl graft union formation. Required for the auxin- mediated promotion of vascular tissue proliferation during hypocotyl graft attachment. This chain is NAC domain-containing protein 71, found in Arabidopsis thaliana (Mouse-ear cress).